The sequence spans 188 residues: UPF0461 protein C5orf24 homolog (188 aa).

Position 37 is a phosphoserine (Ser-37). Lys-75 is covalently cross-linked (Glycyl lysine isopeptide (Lys-Gly) (interchain with G-Cter in SUMO2)). The segment at 79 to 142 (KKKKNLNRSG…GYKVSPGRPP (64 aa)) is disordered. Basic residues predominate over residues 80–92 (KKKNLNRSGKRGR). The segment covering 94–107 (SGTTKSAGYRTSTG) has biased composition (polar residues). Ser-121 and Ser-180 each carry phosphoserine. A Glycyl lysine isopeptide (Lys-Gly) (interchain with G-Cter in SUMO2) cross-link involves residue Lys-184.

The protein belongs to the UPF0461 family.

This chain is UPF0461 protein C5orf24 homolog, found in Bos taurus (Bovine).